The chain runs to 361 residues: MTELPPNAPNPENATNELAQELLRKLRQKQGNWVEWGQAIASLQKSGYNPQDIFEATGFEPVQQNQVIVGSQVYNSLEKSGASAATLAHYATRGSDVLYELRLLTHEERAAAGDLTFTHKVDADEAREIAKAIKDFSRFRILPEGFSNHPGDAVAYQAWKLARQYSDLQERSRLIARGLRFAHSETARKQIEQLLVDFTVVSQRPAPIPPFFRFDTEDELPRIVPVVGQLPLKAEELKAVPLVEEIEPFRLVKFSGEQAWVALPGWQVLLAAEDPVTILATSDRFPKQNQTEPGPVLVVVDRSQREWNDFSYFVVDHDGELDFQWFETKPEFPILGKVIILVRPRRILDENVTKDSWQIDE.

Positions 16 to 197 (NELAQELLRK…RKQIEQLLVD (182 aa)) are N-terminal alpha-helix. The C-terminal beta-sheet stretch occupies residues 221–347 (PRIVPVVGQL…VIILVRPRRI (127 aa)).

Belongs to the RAF family. Homodimer. Forms an RbcL(8)-Raf1(8) complex. Each Raf1 dimer clamps the exterior of an RbcL dimer, protecting it. The extreme C-terminus (residues 354-361) inserts into the catalytic pocket of RbcL where the Glu-361 forms a salt bridge with 'Lys-202'. This insertion probably contributes to the assembly of RbcL(8). Forms complexes of many stoichiometries with RbcL with and without RbcS. RbcX and Raf1 can bind simultaneously to RbcL.

The protein localises to the cytoplasm. In terms of biological role, a major RuBisCO chaperone. Acts after GroEL-GroES chaperonin to fold and/or assemble the large subunit of RuBisCO (ccbL, rbcL). Cooperates with RbcX in RbcL folding, plays the major role in assembly of dimers into RbcL(8)-Raf1(8) intermediate complexes. RbcS replaces Raf1, leading to holoenzyme formation. Functionally, in vitro acts as an antagonist to CcmM35, suggesting it might regulate RuBisCO condensation and decondensation. In Nostoc sp. (strain PCC 7120 / SAG 25.82 / UTEX 2576), this protein is RuBisCO accumulation factor 1.